The following is a 318-amino-acid chain: UDP-3-O-acylglucosamine N-acyltransferase (318 aa).

The active-site Proton acceptor is His-230.

It belongs to the transferase hexapeptide repeat family. LpxD subfamily. As to quaternary structure, homotrimer.

It catalyses the reaction a UDP-3-O-[(3R)-3-hydroxyacyl]-alpha-D-glucosamine + a (3R)-hydroxyacyl-[ACP] = a UDP-2-N,3-O-bis[(3R)-3-hydroxyacyl]-alpha-D-glucosamine + holo-[ACP] + H(+). It participates in bacterial outer membrane biogenesis; LPS lipid A biosynthesis. Its function is as follows. Catalyzes the N-acylation of UDP-3-O-acylglucosamine using 3-hydroxyacyl-ACP as the acyl donor. Is involved in the biosynthesis of lipid A, a phosphorylated glycolipid that anchors the lipopolysaccharide to the outer membrane of the cell. In Wolinella succinogenes (strain ATCC 29543 / DSM 1740 / CCUG 13145 / JCM 31913 / LMG 7466 / NCTC 11488 / FDC 602W) (Vibrio succinogenes), this protein is UDP-3-O-acylglucosamine N-acyltransferase.